The following is a 152-amino-acid chain: Transcriptional repressor NrdR (152 aa).

The span at 1–10 (MKCPSCQHNG) shows a compositional bias: polar residues. Residues 1-21 (MKCPSCQHNGSRVLDSRPADE) form a disordered region. A zinc finger lies at 3 to 34 (CPSCQHNGSRVLDSRPADEGKSIRRRRECEAC). The 91-residue stretch at 49–139 (LIVVKKEGVR…VYRQFKDINV (91 aa)) folds into the ATP-cone domain.

It belongs to the NrdR family. It depends on Zn(2+) as a cofactor.

Functionally, negatively regulates transcription of bacterial ribonucleotide reductase nrd genes and operons by binding to NrdR-boxes. In Bacillus velezensis (strain DSM 23117 / BGSC 10A6 / LMG 26770 / FZB42) (Bacillus amyloliquefaciens subsp. plantarum), this protein is Transcriptional repressor NrdR.